We begin with the raw amino-acid sequence, 212 residues long: Thiamine-phosphate synthase (212 aa).

4-amino-2-methyl-5-(diphosphooxymethyl)pyrimidine is bound by residues 43–47 (QYRNK) and Asn75. Mg(2+) contacts are provided by Asp76 and Asp95. Ser114 is a 4-amino-2-methyl-5-(diphosphooxymethyl)pyrimidine binding site. A 2-[(2R,5Z)-2-carboxy-4-methylthiazol-5(2H)-ylidene]ethyl phosphate-binding site is contributed by 141–143 (SMT). Residue Lys144 participates in 4-amino-2-methyl-5-(diphosphooxymethyl)pyrimidine binding. Gly171 is a binding site for 2-[(2R,5Z)-2-carboxy-4-methylthiazol-5(2H)-ylidene]ethyl phosphate.

The protein belongs to the thiamine-phosphate synthase family. Mg(2+) is required as a cofactor.

The enzyme catalyses 2-[(2R,5Z)-2-carboxy-4-methylthiazol-5(2H)-ylidene]ethyl phosphate + 4-amino-2-methyl-5-(diphosphooxymethyl)pyrimidine + 2 H(+) = thiamine phosphate + CO2 + diphosphate. It carries out the reaction 2-(2-carboxy-4-methylthiazol-5-yl)ethyl phosphate + 4-amino-2-methyl-5-(diphosphooxymethyl)pyrimidine + 2 H(+) = thiamine phosphate + CO2 + diphosphate. It catalyses the reaction 4-methyl-5-(2-phosphooxyethyl)-thiazole + 4-amino-2-methyl-5-(diphosphooxymethyl)pyrimidine + H(+) = thiamine phosphate + diphosphate. It participates in cofactor biosynthesis; thiamine diphosphate biosynthesis; thiamine phosphate from 4-amino-2-methyl-5-diphosphomethylpyrimidine and 4-methyl-5-(2-phosphoethyl)-thiazole: step 1/1. Condenses 4-methyl-5-(beta-hydroxyethyl)thiazole monophosphate (THZ-P) and 2-methyl-4-amino-5-hydroxymethyl pyrimidine pyrophosphate (HMP-PP) to form thiamine monophosphate (TMP). This is Thiamine-phosphate synthase from Nitrosomonas eutropha (strain DSM 101675 / C91 / Nm57).